The following is a 455-amino-acid chain: ATP-dependent protease ATPase subunit HslU (455 aa).

ATP is bound by residues V23, 65–70 (GVGKTE), D266, E333, and R405.

Belongs to the ClpX chaperone family. HslU subfamily. In terms of assembly, a double ring-shaped homohexamer of HslV is capped on each side by a ring-shaped HslU homohexamer. The assembly of the HslU/HslV complex is dependent on binding of ATP.

The protein localises to the cytoplasm. Functionally, ATPase subunit of a proteasome-like degradation complex; this subunit has chaperone activity. The binding of ATP and its subsequent hydrolysis by HslU are essential for unfolding of protein substrates subsequently hydrolyzed by HslV. HslU recognizes the N-terminal part of its protein substrates and unfolds these before they are guided to HslV for hydrolysis. This chain is ATP-dependent protease ATPase subunit HslU, found in Xanthomonas euvesicatoria pv. vesicatoria (strain 85-10) (Xanthomonas campestris pv. vesicatoria).